Consider the following 146-residue polypeptide: MVKKVLLINGPNLNLLGTREPEKYGTTSLSDIEKAAIEQAQLKKNDSEVLTYQNNTEGFIIDRIHEARRQGVGFIVINAGAYTHTSVGIRDALLGTAIPFIEVHITNVHQREPFRHQSYLSDKAVAVICGLGVYGYTAAIEYALNY.

The Proton acceptor role is filled by Y24. Residues N78, H84, and D91 each contribute to the substrate site. H104 (proton donor) is an active-site residue. Substrate-binding positions include 105-106 (IT) and R115.

The protein belongs to the type-II 3-dehydroquinase family. In terms of assembly, homododecamer. Adopts a ring-like structure, composed of an arrangement of two hexameric rings stacked on top of one another.

The catalysed reaction is 3-dehydroquinate = 3-dehydroshikimate + H2O. It functions in the pathway aromatic compound metabolism; 3,4-dihydroxybenzoate biosynthesis; 3,4-dihydroxybenzoate from 3-dehydroquinate: step 1/2. Its function is as follows. Is involved in the catabolism of quinate. Allows the utilization of quinate as carbon source via the beta-ketoadipate pathway. The polypeptide is Catabolic 3-dehydroquinase (Candida tropicalis (strain ATCC MYA-3404 / T1) (Yeast)).